We begin with the raw amino-acid sequence, 564 residues long: Dihydroxy-acid dehydratase 2 (564 aa).

Cys-59 lines the [2Fe-2S] cluster pocket. Position 91 (Asp-91) interacts with Mg(2+). Cys-132 is a [2Fe-2S] cluster binding site. Asp-133 and Lys-134 together coordinate Mg(2+). The residue at position 134 (Lys-134) is an N6-carboxylysine. Cys-204 is a [2Fe-2S] cluster binding site. Residue Glu-454 participates in Mg(2+) binding. Catalysis depends on Ser-480, which acts as the Proton acceptor.

Belongs to the IlvD/Edd family. In terms of assembly, homodimer. It depends on [2Fe-2S] cluster as a cofactor. Requires Mg(2+) as cofactor.

The enzyme catalyses (2R)-2,3-dihydroxy-3-methylbutanoate = 3-methyl-2-oxobutanoate + H2O. The catalysed reaction is (2R,3R)-2,3-dihydroxy-3-methylpentanoate = (S)-3-methyl-2-oxopentanoate + H2O. The protein operates within amino-acid biosynthesis; L-isoleucine biosynthesis; L-isoleucine from 2-oxobutanoate: step 3/4. It functions in the pathway amino-acid biosynthesis; L-valine biosynthesis; L-valine from pyruvate: step 3/4. Functionally, functions in the biosynthesis of branched-chain amino acids. Catalyzes the dehydration of (2R,3R)-2,3-dihydroxy-3-methylpentanoate (2,3-dihydroxy-3-methylvalerate) into 2-oxo-3-methylpentanoate (2-oxo-3-methylvalerate) and of (2R)-2,3-dihydroxy-3-methylbutanoate (2,3-dihydroxyisovalerate) into 2-oxo-3-methylbutanoate (2-oxoisovalerate), the penultimate precursor to L-isoleucine and L-valine, respectively. This is Dihydroxy-acid dehydratase 2 from Staphylococcus saprophyticus subsp. saprophyticus (strain ATCC 15305 / DSM 20229 / NCIMB 8711 / NCTC 7292 / S-41).